Here is a 299-residue protein sequence, read N- to C-terminus: Phosphoribosylaminoimidazole-succinocarboxamide synthase (299 aa).

This sequence belongs to the SAICAR synthetase family.

The catalysed reaction is 5-amino-1-(5-phospho-D-ribosyl)imidazole-4-carboxylate + L-aspartate + ATP = (2S)-2-[5-amino-1-(5-phospho-beta-D-ribosyl)imidazole-4-carboxamido]succinate + ADP + phosphate + 2 H(+). It participates in purine metabolism; IMP biosynthesis via de novo pathway; 5-amino-1-(5-phospho-D-ribosyl)imidazole-4-carboxamide from 5-amino-1-(5-phospho-D-ribosyl)imidazole-4-carboxylate: step 1/2. This chain is Phosphoribosylaminoimidazole-succinocarboxamide synthase, found in Leifsonia xyli subsp. xyli (strain CTCB07).